The primary structure comprises 416 residues: Lipid III flippase (416 aa).

Residues 1–17 (MSLAKASLWTAASTLVK) are Cytoplasmic-facing. The helical transmembrane segment at 18 to 38 (IGAGLLVGKLLAVSFGPAGLG) threads the bilayer. At 39–45 (LAANFRQ) the chain is on the periplasmic side. Residues 46-66 (LITVLGVLAGAGIFNGVTKYV) form a helical membrane-spanning segment. Residues 67-84 (AQYHDNPQQLRRVVGTSS) are Cytoplasmic-facing. A helical membrane pass occupies residues 85–105 (AMVLGFSTLMALVFVLAAAPI). At 106–121 (SQGLFGNTDYQGLVRL) the chain is on the periplasmic side. The helical transmembrane segment at 122-142 (VALVQMGIAWGNLLLALMKGF) threads the bilayer. Topologically, residues 143–144 (RD) are cytoplasmic. A helical transmembrane segment spans residues 145-165 (AAGNALSLIVGSLIGVLAYYV). Residues 166 to 174 (SYRLGGYEG) are Periplasmic-facing. Residues 175-195 (ALLGLALIPALVVIPAAIMLI) form a helical membrane-spanning segment. Residues 196–216 (KRGVIPLSYLKPSWDNGLAGQ) lie on the Cytoplasmic side of the membrane. Residues 217–237 (LSKFTLMALITSVTLPVAYIM) form a helical membrane-spanning segment. Over 238–259 (MRKLLAAQYSWDEVGIWQGVSS) the chain is Periplasmic. Residues 260–280 (ISDAYLQFITASFSVYLLPTL) form a helical membrane-spanning segment. Residues 281–302 (SRLTEKRDITREVVKSLKFVLP) lie on the Cytoplasmic side of the membrane. Residues 303-323 (AVAAASFTVWLLRDFAIWLLL) traverse the membrane as a helical segment. The Periplasmic portion of the chain corresponds to 324-334 (SNKFTAMRDLF). Residues 335–355 (AWQLVGDVLKVGAYVFGYLVI) form a helical membrane-spanning segment. Topologically, residues 356 to 370 (AKASLRFYILAEVSQ) are cytoplasmic. Helical transmembrane passes span 371-391 (FTLL…LGAA) and 392-412 (QAYM…FLLW). The Cytoplasmic segment spans residues 413-416 (RRRA).

It belongs to the polysaccharide transport (PST) (TC 2.A.66.2) family. As to quaternary structure, probably part of a complex composed of WzxE, WzyE and WzzE.

The protein resides in the cell inner membrane. It functions in the pathway bacterial outer membrane biogenesis; enterobacterial common antigen biosynthesis. Its function is as follows. Mediates the transbilayer movement of Und-PP-GlcNAc-ManNAcA-Fuc4NAc (lipid III) from the inner to the outer leaflet of the cytoplasmic membrane during the assembly of enterobacterial common antigen (ECA). Required for the assembly of the phosphoglyceride-linked form of ECA (ECA(PG)) and the water-soluble cyclic form of ECA (ECA(CYC)). Could also mediate the translocation of Und-PP-GlcNAc. The chain is Lipid III flippase from Escherichia coli (strain K12).